Reading from the N-terminus, the 858-residue chain is Envelope glycoprotein gp160 (858 aa).

A signal peptide spans 1–19 (MMNQLLIAILLASACLVYC). Residues 20 to 679 (TQYVTVFYGV…LTSWVKYIQY (660 aa)) lie on the Extracellular side of the membrane. The N-linked (GlcNAc...) asparagine; by host glycan is linked to N34. Cysteines 41 and 54 form a disulfide. 26 N-linked (GlcNAc...) asparagine; by host glycosylation sites follow: N67, N76, N119, N120, N151, N166, N179, N192, N193, N196, N206, N238, N241, N248, N272, N278, N289, N300, N310, N367, N371, N400, N410, N447, N463, and N466. 5 cysteine pairs are disulfide-bonded: C98-C214, C105-C205, C110-C163, C227-C257, and C237-C249. The segment at 110–162 (CSSTESSTGNNTTSKSTSTTTTTPTDQEQEISEDTPCARADNCSGLGEEETIN) is V1. A compositionally biased stretch (low complexity) spans 111–134 (SSTESSTGNNTTSKSTSTTTTTPT). The segment at 111–142 (SSTESSTGNNTTSKSTSTTTTTPTDQEQEISE) is disordered. Residues 163-205 (CQFNMTGLERDKKKQYNETWYSKDVVCETNNSTNQTQCYMNHC) are V2. Residues 305–339 (CKRPGNKTVKQIMLMSGHVFHSHYQPINKRPRQAW) are V3. Cysteines 305 and 340 form a disulfide. 2 cysteine pairs are disulfide-bonded: C392–C446 and C399–C419. Residues 399 to 419 (CNMTWFLNWIENKTHRNYAPC) form a V4 region. Residues 462 to 469 (NNQTNITF) form a V5 region. The tract at residues 512 to 532 (GVFVLGFLGFLATAGSAMGAA) is fusion peptide. The tract at residues 575–591 (LQARVTAIEKYLQDQAR) is immunosuppression. Residues N611, N620, and N636 are each glycosylated (N-linked (GlcNAc...) asparagine; by host). Residues 624–645 (QEWEKQVRYLEANISKSLEQAQ) are a coiled coil. Positions 657-678 (KLNSWDIFGNWFDLTSWVKYIQ) are MPER; binding to GalCer. Residues 680–700 (GVLIIVAVIALRIVIYVVQML) form a helical membrane-spanning segment. The Cytoplasmic segment spans residues 701 to 858 (SRLRKGYRPV…IRQGAEIALL (158 aa)). The YXXV motif; contains endocytosis signal motif lies at 707 to 710 (YRPV). Residue C773 is the site of S-palmitoyl cysteine; by host attachment. The short motif at 857–858 (LL) is the Di-leucine internalization motif element.

The mature envelope protein (Env) consists of a homotrimer of non-covalently associated gp120-gp41 heterodimers. The resulting complex protrudes from the virus surface as a spike. There seems to be as few as 10 spikes on the average virion. Interacts with human CD4, CCR5 and CXCR4, to form a P4HB/PDI-CD4-CXCR4-gp120 complex. Gp120 also interacts with the C-type lectins CD209/DC-SIGN and CLEC4M/DC-SIGNR (collectively referred to as DC-SIGN(R)). Gp120 and gp41 interact with GalCer. As to quaternary structure, the mature envelope protein (Env) consists of a homotrimer of non-covalently associated gp120-gp41 heterodimers. The resulting complex protrudes from the virus surface as a spike. There seems to be as few as 10 spikes on the average virion. Post-translationally, specific enzymatic cleavages in vivo yield mature proteins. Envelope glycoproteins are synthesized as an inactive precursor that is heavily N-glycosylated and processed likely by host cell furin in the Golgi to yield the mature SU and TM proteins. The cleavage site between SU and TM requires the minimal sequence [KR]-X-[KR]-R. In terms of processing, palmitoylation of the transmembrane protein and of Env polyprotein (prior to its proteolytic cleavage) is essential for their association with host cell membrane lipid rafts. Palmitoylation is therefore required for envelope trafficking to classical lipid rafts, but not for viral replication.

It is found in the virion membrane. The protein localises to the host cell membrane. The protein resides in the host endosome membrane. Its function is as follows. The surface protein gp120 (SU) attaches the virus to the host lymphoid cell by binding to the primary receptor CD4. This interaction induces a structural rearrangement creating a high affinity binding site for a chemokine coreceptor like CXCR4 and/or CCR5. This peculiar 2 stage receptor-interaction strategy allows gp120 to maintain the highly conserved coreceptor-binding site in a cryptic conformation, protected from neutralizing antibodies. Since CD4 also displays a binding site for the disulfide-isomerase P4HB/PDI, a P4HB/PDI-CD4-CXCR4-gp120 complex may form. In that complex, P4HB/PDI could reach and reduce gp120 disulfide bonds, causing major conformational changes in gp120. TXN, another PDI family member could also be involved in disulfide rearrangements in Env during fusion. These changes are transmitted to the transmembrane protein gp41 and are thought to activate its fusogenic potential by unmasking its fusion peptide. In terms of biological role, the surface protein gp120 is a ligand for CD209/DC-SIGN and CLEC4M/DC-SIGNR, which are respectively found on dendritic cells (DCs), and on endothelial cells of liver sinusoids and lymph node sinuses. These interactions allow capture of viral particles at mucosal surfaces by these cells and subsequent transmission to permissive cells. DCs are professional antigen presenting cells, critical for host immunity by inducing specific immune responses against a broad variety of pathogens. They act as sentinels in various tissues where they take up antigen, process it, and present it to T-cells following migration to lymphoid organs. HIV subverts the migration properties of dendritic cells to gain access to CD4+ T-cells in lymph nodes. Virus transmission to permissive T-cells occurs either in trans (without DCs infection, through viral capture and transmission), or in cis (following DCs productive infection, through the usual CD4-gp120 interaction), thereby inducing a robust infection. In trans infection, bound virions remain infectious over days and it is proposed that they are not degraded, but protected in non-lysosomal acidic organelles within the DCs close to the cell membrane thus contributing to the viral infectious potential during DCs' migration from the periphery to the lymphoid tissues. On arrival at lymphoid tissues, intact virions recycle back to DCs' cell surface allowing virus transmission to CD4+ T-cells. Virion capture also seems to lead to MHC-II-restricted viral antigen presentation, and probably to the activation of HIV-specific CD4+ cells. The transmembrane protein gp41 (TM) acts as a class I viral fusion protein. Under the current model, the protein has at least 3 conformational states: pre-fusion native state, pre-hairpin intermediate state, and post-fusion hairpin state. During fusion of viral and target intracellular membranes, the coiled coil regions (heptad repeats) assume a trimer-of-hairpins structure, positioning the fusion peptide in close proximity to the C-terminal region of the ectodomain. The formation of this structure appears to drive apposition and subsequent fusion of viral and target cell membranes. Complete fusion occurs in host cell endosomes and is dynamin-dependent, however some lipid transfer might occur at the plasma membrane. The virus undergoes clathrin-dependent internalization long before endosomal fusion, thus minimizing the surface exposure of conserved viral epitopes during fusion and reducing the efficacy of inhibitors targeting these epitopes. Membranes fusion leads to delivery of the nucleocapsid into the cytoplasm. Functionally, the envelope glycoprotein gp160 precursor down-modulates cell surface CD4 antigen by interacting with it in the endoplasmic reticulum and blocking its transport to the cell surface. Its function is as follows. The gp120-gp41 heterodimer seems to contribute to T-cell depletion during HIV-1 infection. The envelope glycoproteins expressed on the surface of infected cells induce apoptosis through an interaction with uninfected cells expressing the receptor (CD4) and the coreceptors CXCR4 or CCR5. This type of bystander killing may be obtained by at least three distinct mechanisms. First, the interaction between the 2 cells can induce cellular fusion followed by nuclear fusion within the syncytium. Syncytia are condemned to die from apoptosis. Second, the 2 interacting cells may not fuse entirely and simply exchange plasma membrane lipids, after a sort of hemifusion process, followed by rapid death. Third, it is possible that virus-infected cells, on the point of undergoing apoptosis, fuse with CD4-expressing cells, in which case apoptosis is rapidly transmitted from one cell to the other and thus occurs in a sort of contagious fashion. In terms of biological role, the gp120-gp41 heterodimer allows rapid transcytosis of the virus through CD4 negative cells such as simple epithelial monolayers of the intestinal, rectal and endocervical epithelial barriers. Both gp120 and gp41 specifically recognize glycosphingolipids galactosyl-ceramide (GalCer) or 3' sulfo-galactosyl-ceramide (GalS) present in the lipid rafts structures of epithelial cells. Binding to these alternative receptors allows the rapid transcytosis of the virus through the epithelial cells. This transcytotic vesicle-mediated transport of virions from the apical side to the basolateral side of the epithelial cells does not involve infection of the cells themselves. The protein is Envelope glycoprotein gp160 (env) of Homo sapiens (Human).